Consider the following 150-residue polypeptide: C-type lectin mosGCTL-7 (150 aa).

Residues 1–17 (MQLVHVLVVLLSVVAHA) form the signal peptide. The C-type lectin domain occupies 18-140 (KKFFIPNLKA…CRGFKAYIVC (123 aa)). Asparagine 67 carries an N-linked (GlcNAc...) asparagine glycan. Cysteines 111 and 131 form a disulfide.

As to quaternary structure, interacts with putative receptor-type tyrosine-protein phosphatase mosPTP-1; the interaction probably mediates the recruitment of Japanese encephalitis virus particles in complex with C-type lectin mosGCTL-7 to the cell surface. (Microbial infection) Interacts with envelope protein E (glycosylated) of Japanese encephalitis virus in a calcium-dependent manner.

It localises to the secreted. Its function is as follows. Carbohydrate-binding protein. (Microbial infection) Facilitates Japanese encephalitis virus infection in mosquitoes probably via capturing viral particles and presenting them to a ligand on the cell surface, thereby facilitating viral entry. The protein is C-type lectin mosGCTL-7 of Aedes aegypti (Yellowfever mosquito).